Here is a 502-residue protein sequence, read N- to C-terminus: 1-aminocyclopropane-1-carboxylate synthase-like protein 1 (502 aa).

The segment at 1–24 is disordered; the sequence is MFCLPQQESTAPTTCTGSASTQDM. E106 contributes to the substrate binding site. An N6-(pyridoxal phosphate)lysine modification is found at K324.

This sequence belongs to the class-I pyridoxal-phosphate-dependent aminotransferase family.

In terms of biological role, does not catalyze the synthesis of 1-aminocyclopropane-1-carboxylate but is capable of catalyzing the deamination of L-vinylglycine. The polypeptide is 1-aminocyclopropane-1-carboxylate synthase-like protein 1 (Accs) (Mus musculus (Mouse)).